A 397-amino-acid polypeptide reads, in one-letter code: Elongation factor Tu (397 aa).

One can recognise a tr-type G domain in the interval 10 to 206 (KPHCNIGTIG…TIDEYVPDPE (197 aa)). The segment at 19–26 (GHVDHGKT) is G1. Residue 19-26 (GHVDHGKT) coordinates GTP. Thr26 contributes to the Mg(2+) binding site. Residues 61 to 65 (GITIS) are G2. The interval 82 to 85 (DCPG) is G3. Residues 82–86 (DCPGH) and 137–140 (NKCD) contribute to the GTP site. Residues 137–140 (NKCD) form a G4 region. Residues 175-177 (SAL) form a G5 region.

It belongs to the TRAFAC class translation factor GTPase superfamily. Classic translation factor GTPase family. EF-Tu/EF-1A subfamily. In terms of assembly, monomer.

Its subcellular location is the cytoplasm. It catalyses the reaction GTP + H2O = GDP + phosphate + H(+). Its function is as follows. GTP hydrolase that promotes the GTP-dependent binding of aminoacyl-tRNA to the A-site of ribosomes during protein biosynthesis. In Lachnospira eligens (strain ATCC 27750 / DSM 3376 / VPI C15-48 / C15-B4) (Eubacterium eligens), this protein is Elongation factor Tu.